Here is a 409-residue protein sequence, read N- to C-terminus: AP-1-like transcription factor YAP2 (409 aa).

2 short sequence motifs (bipartite nuclear localization signal) span residues 17-24 (MKKQMLLN) and 47-54 (SRRTAQNR). Residues 26-64 (DGTPKRKVGRPGRKRIDSEAKSRRTAQNRAAQRAFRDRK) are disordered. The bZIP domain occupies 43 to 106 (SEAKSRRTAQ…KSLLSEITKY (64 aa)). The segment at 46–69 (KSRRTAQNRAAQRAFRDRKEAKMK) is basic motif. The tract at residues 71–99 (LQERVELLEQKDAQNKTTTDFLLCSLKSL) is leucine-zipper. Positions 127-156 (QKRENEKGTSTAVSKAAKELPSPNSDENMT) are disordered. Residues 356-387 (CYHILEEISSLPKYSSLDIDDLCSELIIKAKC) are c-CRD. Positions 372 to 379 (LDIDDLCS) match the Nuclear export signal motif.

Belongs to the bZIP family. YAP subfamily. As to quaternary structure, homodimer; disulfide-linked, upon oxidation. Interacts in the nucleus with the nuclear export protein CRM1. Interacts with RCK1. Post-translationally, depending on the oxidative stress inducing agent, CAD1/YAP2 can undergo two distinct conformational changes, both through oxidation of cysteine residues, and both masking the nuclear export signal, thus abolishing nuclear export by CRM1/exportin 1. Peroxide stress induces the formation of possible intramolecular disulfide bonds as well as intermolcular disulfide within a homodimer. Cadmium may bind directly to specific cysteine residues (Cys-391 and either Cys-356 or Cys-387) in the c-CRD.

Its subcellular location is the cytoplasm. It is found in the nucleus. Functionally, transcription activator involved in oxidative stress response and cadmium resistance. Regulates the transcription of genes overrepresented for the function of stabilizing proteins including the inducible Hsp90-family protein HSP82. Preferentially binds to promoters with the core binding site 5'-TTA[CG]TAA-3'. Activity of the transcription factor is controlled through oxidation of specific cysteine residues resulting in the alteration of its subcellular location. Activation by alkyl hydroperoxides or cadmium induces nuclear accumulation and as a result CAD1/YAP2 transcriptional activity. The sequence is that of AP-1-like transcription factor YAP2 from Saccharomyces cerevisiae (strain ATCC 204508 / S288c) (Baker's yeast).